The chain runs to 406 residues: Vacuole membrane protein 1 (406 aa).

Residues 1 to 21 (MAENGKNCDQRRVAMNKEHHN) show a composition bias toward basic and acidic residues. The disordered stretch occupies residues 1–35 (MAENGKNCDQRRVAMNKEHHNGNFTDPSSVNEKKR). Ala2 is subject to N-acetylalanine. Residues 2-43 (AENGKNCDQRRVAMNKEHHNGNFTDPSSVNEKKRREREERQN) lie on the Cytoplasmic side of the membrane. Residues 44–64 (IVLWRQPLITLQYFSLEILVI) traverse the membrane as a helical segment. Topologically, residues 65–77 (LKEWTSKLWHRQS) are extracellular. Residues 78-98 (IVVSFLLLLAVLIATYYVEGV) traverse the membrane as a helical segment. Over 99-109 (HQQYVQRIEKQ) the chain is Cytoplasmic. The chain crosses the membrane as a helical span at residues 110–130 (FLLYAYWIGLGILSSVGLGTG). Residues 131-250 (LHTFLLYLGP…ASRAKLAVQK (120 aa)) are Extracellular-facing. The VTT domain stretch occupies residues 173–316 (GTEGTISLWS…FVIITFSKHI (144 aa)). Residues 251 to 271 (LVQKVGFFGILACASIPNPLF) form a helical membrane-spanning segment. Residues 272–273 (DL) lie on the Cytoplasmic side of the membrane. A helical transmembrane segment spans residues 274–294 (AGITCGHFLVPFWTFFGATLI). The Extracellular portion of the chain corresponds to 295 to 305 (GKAIIKMHIQK). Residues 306-326 (IFVIITFSKHIVEQMVAFIGA) form a helical membrane-spanning segment. Topologically, residues 327–363 (VPGIGPSLQKPFQEYLEAQRQKLHHKSEMGTPQGENW) are cytoplasmic. Residues 364–384 (LSWMFEKLVVVMVCYFILSII) form a helical membrane-spanning segment. The Extracellular segment spans residues 385 to 406 (NSMAQSYAKRIQQRLNSEEKTK).

Belongs to the VMP1 family. Interacts with BECN1. Interacts with TJP1. Interacts with TP53INP2. Interacts with TMEM41B. Interacts with ATP2A2, PLN and SLN; competes with PLN and SLN to prevent them from forming an inhibitory complex with ATP2A2. Interacts with ATG2A.

The protein localises to the endoplasmic reticulum-Golgi intermediate compartment membrane. It localises to the cell membrane. The protein resides in the vacuole membrane. It is found in the endoplasmic reticulum membrane. The enzyme catalyses a 1,2-diacyl-sn-glycero-3-phospho-L-serine(in) = a 1,2-diacyl-sn-glycero-3-phospho-L-serine(out). The catalysed reaction is cholesterol(in) = cholesterol(out). It carries out the reaction a 1,2-diacyl-sn-glycero-3-phosphocholine(in) = a 1,2-diacyl-sn-glycero-3-phosphocholine(out). It catalyses the reaction a 1,2-diacyl-sn-glycero-3-phosphoethanolamine(in) = a 1,2-diacyl-sn-glycero-3-phosphoethanolamine(out). In terms of biological role, phospholipid scramblase involved in lipid homeostasis and membrane dynamics processes. Has phospholipid scramblase activity toward cholesterol and phosphatidylserine, as well as phosphatidylethanolamine and phosphatidylcholine. Required for autophagosome formation: participates in early stages of autophagosome biogenesis at the endoplasmic reticulum (ER) membrane by reequilibrating the leaflets of the ER as lipids are extracted by ATG2 (ATG2A or ATG2B) to mediate autophagosome assembly. Regulates ATP2A2 activity to control ER-isolation membrane contacts for autophagosome formation. In addition to autophagy, involved in other processes in which phospholipid scramblase activity is required. Modulates ER contacts with lipid droplets, mitochondria and endosomes. Plays an essential role in formation of cell junctions. Upon stress such as bacterial and viral infection, promotes formation of cytoplasmic vacuoles followed by cell death. Involved in the cytoplasmic vacuolization of acinar cells during the early stage of acute pancreatitis. (Microbial infection) Host factor required for infection by all flaviviruses tested such as Zika virus and Yellow fever virus. Probably required post-entry of the virus to facilitate the ER membrane remodeling necessary to form replication organelles. The polypeptide is Vacuole membrane protein 1 (Homo sapiens (Human)).